The sequence spans 559 residues: NXPE family member 3 (559 aa).

A signal peptide spans 1 to 30 (MWTNFFKLRLFCCLLAVLMVVVLVINVTQV). 3 N-linked (GlcNAc...) asparagine glycosylation sites follow: N237, N292, and N346.

The protein belongs to the NXPE family.

It is found in the secreted. This Homo sapiens (Human) protein is NXPE family member 3 (NXPE3).